We begin with the raw amino-acid sequence, 320 residues long: MAFAKISQVAHYAPAQVVTNDDLSKIMDTSDEWIRSRTGIQERRISLNENTSDLATNVAYQLLEKSGLSPEELDFVLVATISPDNSMPSVAARVQGTIGAVNAFAFDITAACSGFVFALATAEKLIKSGAYKKGLVIGAEVLSKTLDWSDRATAVLFGDGAGGVLLEESEEEHFFGESLNTDGSKGGLESGASAVISPYSDGTEQPNPYMQMDGKAIFDFAVKTVSKSIKALVEEKGEPDYFLLHQANIRILDTMAKKIDVSRDKFLANMMSYGNTSAASIPILLSENVANETLKLGSDQTILLSGFGGGLTWGSLIVKI.

Catalysis depends on residues Cys-112 and His-245. Positions 246 to 250 (QANIR) are ACP-binding. Asn-275 is a catalytic residue.

It belongs to the thiolase-like superfamily. FabH family. As to quaternary structure, homodimer.

Its subcellular location is the cytoplasm. The enzyme catalyses malonyl-[ACP] + acetyl-CoA + H(+) = 3-oxobutanoyl-[ACP] + CO2 + CoA. Its pathway is lipid metabolism; fatty acid biosynthesis. Its function is as follows. Catalyzes the condensation reaction of fatty acid synthesis by the addition to an acyl acceptor of two carbons from malonyl-ACP. Catalyzes the first condensation reaction which initiates fatty acid synthesis and may therefore play a role in governing the total rate of fatty acid production. Possesses both acetoacetyl-ACP synthase and acetyl transacylase activities. Its substrate specificity determines the biosynthesis of branched-chain and/or straight-chain of fatty acids. This chain is Beta-ketoacyl-[acyl-carrier-protein] synthase III, found in Streptococcus thermophilus (strain CNRZ 1066).